The chain runs to 101 residues: Small ribosomal subunit protein uS14 (101 aa).

It belongs to the universal ribosomal protein uS14 family. As to quaternary structure, part of the 30S ribosomal subunit. Contacts proteins S3 and S10.

Binds 16S rRNA, required for the assembly of 30S particles and may also be responsible for determining the conformation of the 16S rRNA at the A site. The chain is Small ribosomal subunit protein uS14 from Acinetobacter baumannii (strain SDF).